Here is a 1032-residue protein sequence, read N- to C-terminus: Histone lysine demethylase PHF8 (1032 aa).

A PHD-type zinc finger spans residues 5–56 (PVYCLCRLPYDVTRFMIECDVCQDWFHGSCVGVEEDKAAEIDLYHCPNCQVT). The interval 65–83 (RRGAVKHADVGLGRDSGRP) is linker. The region spanning 199 to 355 (FSDTRLSNLV…MQLRAYEIEK (157 aa)) is the JmjC domain. Position 248 (threonine 248) interacts with substrate. The Fe cation site is built by histidine 251 and aspartate 253. Lysine 268 serves as a coordination point for substrate. Histidine 323 is a Fe cation binding site. Disordered stretches follow at residues 455–515 (SGTP…KGKE), 577–660 (QGKK…VDFD), 697–857 (LDSA…REGA), 875–923 (QQEQ…EPPV), and 943–1015 (EYTA…ATAK). The span at 473-483 (QLNTPLTFSQH) shows a compositional bias: polar residues. Over residues 583–592 (AGSANGAGSS) the composition is skewed to low complexity. Residues 620 to 632 (PRRRPSLPSKKKL) show a composition bias toward basic residues. Positions 644–655 (PCSDPHRIREPG) are enriched in basic and acidic residues. 2 stretches are compositionally biased toward low complexity: residues 699-710 (SALSEEAPASPS) and 724-739 (PPSSSSSSSSSSPLSI). A compositionally biased stretch (basic residues) spans 774-784 (PGKRPIKRPAR). Residues 848-857 (KQERPVREGA) are compositionally biased toward basic and acidic residues. Residues 882–891 (ITKRKYTKKK) show a composition bias toward basic residues. Residues 970–990 (SRRPSLSPQNSSSYSPSAPSP) show a composition bias toward low complexity.

The protein belongs to the JHDM1 histone demethylase family. JHDM1D subfamily. Fe(2+) serves as cofactor.

It is found in the nucleus. Its subcellular location is the nucleolus. The catalysed reaction is N(6),N(6)-dimethyl-L-lysyl(36)-[histone H3] + 2 2-oxoglutarate + 2 O2 = L-lysyl(36)-[histone H3] + 2 formaldehyde + 2 succinate + 2 CO2. It carries out the reaction N(6),N(6)-dimethyl-L-lysyl(9)-[histone H3] + 2 2-oxoglutarate + 2 O2 = L-lysyl(9)-[histone H3] + 2 formaldehyde + 2 succinate + 2 CO2. Histone lysine demethylase with selectivity for the di- and monomethyl states that plays a key role cell cycle progression, rDNA transcription and brain development. Demethylates mono- and dimethylated histone H3 'Lys-9' residue (H3K9Me1 and H3K9Me2), dimethylated H3 'Lys-27' (H3K27Me2) and monomethylated histone H4 'Lys-20' residue (H4K20Me1). Acts as a transcription activator as H3K9Me1, H3K9Me2, H3K27Me2 and H4K20Me1 are epigenetic repressive marks. Involved in cell cycle progression by being required to control G1-S transition. Acts as a coactivator of rDNA transcription, by activating polymerase I (pol I) mediated transcription of rRNA genes. Has activity toward H4K20Me1 only when nucleosome is used as a substrate and when not histone octamer is used as substrate. Required for brain development, probably by regulating expression of neuron-specific genes. This Danio rerio (Zebrafish) protein is Histone lysine demethylase PHF8 (phf8).